Consider the following 225-residue polypeptide: NAD(P)H-hydrate epimerase (225 aa).

The YjeF N-terminal domain occupies 9 to 209 (MQTIDNYTVE…DIGLLTPQDF (201 aa)). A (6S)-NADPHX-binding site is contributed by 57–61 (NNGAD). K(+)-binding residues include asparagine 58 and aspartate 119. Residues 123-129 (GTGLNNL) and aspartate 152 contribute to the (6S)-NADPHX site. Threonine 155 is a binding site for K(+).

This sequence belongs to the NnrE/AIBP family. It depends on K(+) as a cofactor.

It catalyses the reaction (6R)-NADHX = (6S)-NADHX. The enzyme catalyses (6R)-NADPHX = (6S)-NADPHX. Functionally, catalyzes the epimerization of the S- and R-forms of NAD(P)HX, a damaged form of NAD(P)H that is a result of enzymatic or heat-dependent hydration. This is a prerequisite for the S-specific NAD(P)H-hydrate dehydratase to allow the repair of both epimers of NAD(P)HX. This is NAD(P)H-hydrate epimerase from Leuconostoc sp. (strain C2).